The primary structure comprises 4749 residues: Dynein heavy chain domain-containing protein 1 (4749 aa).

Low complexity predominate over residues 1–18 (MKPHSQTSPPSLPMPSTS). Disordered stretches follow at residues 1-27 (MKPHSQTSPPSLPMPSTSCRPGQTQKP), 275-308 (ESSDTEQAEGEPAGRKLQVASEAPEEKALKKKSS), and 2690-2785 (ESLA…KLQS). Residues 2696–2716 (CEEEEVEEEKVPEVESEEEIA) are compositionally biased toward acidic residues. Polar residues predominate over residues 2738–2749 (QATTGSFLSENS). Residues 3197 to 3224 (CQHQESLIENLVRQHDALKAQQEVFLEQ) adopt a coiled-coil conformation. Residues 3568–3667 (PPKQNRSLEP…SLPSCLTVLS (100 aa)) are disordered. A compositionally biased stretch (basic and acidic residues) spans 3578–3593 (SPKESKEKFHVTKQDS). A coiled-coil region spans residues 3594–3636 (GDNTEDELEDENNEEEDEANEQRKEQKAEENKIQGENEQEVQE). A compositionally biased stretch (acidic residues) spans 3595 to 3612 (DNTEDELEDENNEEEDEA). Over residues 3613-3628 (NEQRKEQKAEENKIQG) the composition is skewed to basic and acidic residues. Positions 3644–3655 (ESSGSHSSLPSE) are enriched in low complexity. The segment covering 3656–3667 (TQSLPSCLTVLS) has biased composition (polar residues). Coiled coils occupy residues 3818–3838 (MVRTQAKICQLNAQMEELEDQ) and 4431–4451 (ERQLQQRLAQAKKRLVALQAL).

The protein belongs to the dynein heavy chain family. Expressed in spermatozoa (at protein level).

The protein localises to the cell projection. It localises to the cilium. It is found in the flagellum. Functionally, essential for the normal function of sperm flagella axonemes. This chain is Dynein heavy chain domain-containing protein 1 (Dnhd1), found in Mus musculus (Mouse).